A 190-amino-acid chain; its full sequence is Large ribosomal subunit protein uL5 (190 aa).

This sequence belongs to the universal ribosomal protein uL5 family. In terms of assembly, part of the 50S ribosomal subunit; part of the 5S rRNA/L5/L18/L25 subcomplex. Contacts the 5S rRNA and the P site tRNA. Forms a bridge to the 30S subunit in the 70S ribosome.

In terms of biological role, this is one of the proteins that bind and probably mediate the attachment of the 5S RNA into the large ribosomal subunit, where it forms part of the central protuberance. In the 70S ribosome it contacts protein S13 of the 30S subunit (bridge B1b), connecting the 2 subunits; this bridge is implicated in subunit movement. Contacts the P site tRNA; the 5S rRNA and some of its associated proteins might help stabilize positioning of ribosome-bound tRNAs. This Corynebacterium efficiens (strain DSM 44549 / YS-314 / AJ 12310 / JCM 11189 / NBRC 100395) protein is Large ribosomal subunit protein uL5.